Reading from the N-terminus, the 216-residue chain is 2,5-diamino-6-ribosylamino-4(3H)-pyrimidinone 5'-phosphate reductase (216 aa).

NADP(+) contacts are provided by residues Thr51, Asp55, 79-82, Val126, and 148-151; these read SMAR and GSTL.

Belongs to the HTP reductase family. Homodimer.

The catalysed reaction is 2,5-diamino-6-(1-D-ribitylamino)pyrimidin-4(3H)-one 5'-phosphate + NADP(+) = 2,5-diamino-6-(1-D-ribosylamino)pyrimidin-4(3H)-one 5'-phosphate + NADPH + H(+). It carries out the reaction 2,5-diamino-6-(1-D-ribitylamino)pyrimidin-4(3H)-one 5'-phosphate + NAD(+) = 2,5-diamino-6-(1-D-ribosylamino)pyrimidin-4(3H)-one 5'-phosphate + NADH + H(+). Its pathway is cofactor biosynthesis; riboflavin biosynthesis. Functionally, catalyzes an early step in riboflavin biosynthesis, the NADPH-dependent reduction of the ribose side chain of 2,5-diamino-6-ribosylamino-4(3H)-pyrimidinone 5'-phosphate, yielding 2,5-diamino-6-ribitylamino-4(3H)-pyrimidinone 5'-phosphate. The chain is 2,5-diamino-6-ribosylamino-4(3H)-pyrimidinone 5'-phosphate reductase from Methanothermobacter thermautotrophicus (strain ATCC 29096 / DSM 1053 / JCM 10044 / NBRC 100330 / Delta H) (Methanobacterium thermoautotrophicum).